The following is a 604-amino-acid chain: Integrin alpha-IIb (604 aa).

Residues 1–61 (QVLDSPFPTG…ASVQLLVQDS (61 aa)) form an FG-GAP repeat. At 1 to 558 (QVLDSPFPTG…TQLLRALEER (558 aa)) the chain is on the extracellular side. Residues D22, D24, N26, Y28, and D30 each contribute to the Ca(2+) site. Disulfide bonds link C69-C80 and C86-C141. N166 is a glycosylation site (N-linked (GlcNAc...) asparagine). 4 cysteine pairs are disulfide-bonded: C198-C204, C270-C283, C422-C486, and C476-C481. N276 carries N-linked (GlcNAc...) asparagine glycosylation. A glycan (N-linked (GlcNAc...) asparagine) is linked at N527. Residues 559–584 (AIPIWWVLVGVLGGLLLLTILVLAMW) form a helical membrane-spanning segment. The Cytoplasmic segment spans residues 585–604 (KVGFFKRNRPPLEEDDEEGE). Positions 587–591 (GFFKR) match the GFFKR motif motif.

It belongs to the integrin alpha chain family. Heterodimer of an alpha and a beta subunit. The alpha subunit is composed of a heavy and a light chain linked by a disulfide bond. Alpha-IIb associates with beta-3. Directly interacts with RNF181. Interacts (via C-terminus cytoplasmic tail region) with CIB1; the interaction is direct and calcium-dependent. Interacts (via C-terminus cytoplasmic tail region) with CIB2, CIB3 and CIB4; the interactions are stabilized/increased in a calcium and magnesium-dependent manner. ITGA2B:ITGB3 interacts with PPIA/CYPA; the interaction is ROS and PPIase activity-dependent and is increased in the presence of thrombin. ITGA2B:ITGB3 interacts with SELP (via C-type lectin domain); the interaction mediates cell-cell interaction and adhesion.

It is found in the membrane. Integrin alpha-IIb/beta-3 is a receptor for fibronectin, fibrinogen, plasminogen, prothrombin, thrombospondin and vitronectin. It recognizes the sequence R-G-D in a wide array of ligands. It recognizes the sequence H-H-L-G-G-G-A-K-Q-A-G-D-V in fibrinogen gamma chain. Following activation integrin alpha-IIb/beta-3 brings about platelet/platelet interaction through binding of soluble fibrinogen. This step leads to rapid platelet aggregation which physically plugs ruptured endothelial cell surface. This chain is Integrin alpha-IIb (ITGA2B), found in Papio cynocephalus (Yellow baboon).